Consider the following 428-residue polypeptide: uncharacterized protein (428 aa).

A run of 12 helical transmembrane segments spans residues 14-34 (LYDW…FPLF), 55-75 (YTIA…GTIA), 84-104 (FFGF…FIPS), 107-127 (WLLL…ANVF), 149-169 (FGLG…VILL), 182-202 (ASQL…IPMI), 238-258 (LFLF…IITM), 272-292 (SLLI…IIYG), 302-322 (TMLY…YFME), 324-344 (TLDF…IQAL), 361-381 (FFGF…LLIA), and 392-412 (TAVF…AFVP).

It belongs to the major facilitator superfamily.

It is found in the cell membrane. This is an uncharacterized protein from Bacillus subtilis (strain 168).